We begin with the raw amino-acid sequence, 341 residues long: Limbic system-associated membrane protein (341 aa).

An N-terminal signal peptide occupies residues 1-28 (MVGRVQPDRKQLPLVLLRLLCLLPTGLP). Ig-like domains are found at residues 29–122 (VRSV…PKTS), 132–214 (PKIS…VKVT), and 219–304 (PTIT…ASLV). Residues Asn-40 and Asn-66 are each glycosylated (N-linked (GlcNAc...) asparagine). Cysteines 53 and 111 form a disulfide. Phosphotyrosine is present on Tyr-94. 2 N-linked (GlcNAc...) asparagine glycosylation sites follow: Asn-136 and Asn-148. Disulfide bonds link Cys-153–Cys-197 and Cys-239–Cys-290. N-linked (GlcNAc...) asparagine glycosylation is found at Asn-279, Asn-287, and Asn-300.

This sequence belongs to the immunoglobulin superfamily. IgLON family.

It localises to the cell membrane. Functionally, mediates selective neuronal growth and axon targeting. Contributes to the guidance of developing axons and remodeling of mature circuits in the limbic system. Essential for normal growth of the hippocampal mossy fiber projection. This Mus musculus (Mouse) protein is Limbic system-associated membrane protein (Lsamp).